The sequence spans 346 residues: MTEQRIIASSSTREDDAADASIRPKRLADYLGQQPVREQMEIYIQAAKARGEAMDHVLIFGPPGLGKTTLSHVIANELGVSLRVTSGPVIEKAGDLAALLTNLQPHDVLFIDEIHRLSPVVEEVLYPAMEDFQIDIMIGDGPAARSIKIDLPPFTLIGATTRAGLLTAPLRDRFGIVQRLEFYSPQELTRIVSRSAAILGIDCTPEGAAEIARRARGTPRIANRLLRRVRDYAQVKAAGHIDLPVAQAAMQMLKVDPEGFDELDRRMLRTIVEHFDGGPVGVESLAASLSEERGTLEDVIEPYLIQQGFLIRTARGRMVTPKAYLHLGLKVPRERAPGIGEPGDLF.

The large ATPase domain (RuvB-L) stretch occupies residues 1–183 (MTEQRIIASS…FGIVQRLEFY (183 aa)). Residues Ile22, Arg23, Gly64, Lys67, Thr68, Thr69, 130–132 (EDF), Arg173, Tyr183, and Arg220 contribute to the ATP site. Thr68 contacts Mg(2+). A small ATPAse domain (RuvB-S) region spans residues 184-254 (SPQELTRIVS…VAQAAMQMLK (71 aa)). The interval 257 to 346 (PEGFDELDRR…PGIGEPGDLF (90 aa)) is head domain (RuvB-H). The DNA site is built by Arg293, Arg312, and Arg317.

It belongs to the RuvB family. In terms of assembly, homohexamer. Forms an RuvA(8)-RuvB(12)-Holliday junction (HJ) complex. HJ DNA is sandwiched between 2 RuvA tetramers; dsDNA enters through RuvA and exits via RuvB. An RuvB hexamer assembles on each DNA strand where it exits the tetramer. Each RuvB hexamer is contacted by two RuvA subunits (via domain III) on 2 adjacent RuvB subunits; this complex drives branch migration. In the full resolvosome a probable DNA-RuvA(4)-RuvB(12)-RuvC(2) complex forms which resolves the HJ.

It localises to the cytoplasm. It carries out the reaction ATP + H2O = ADP + phosphate + H(+). The RuvA-RuvB-RuvC complex processes Holliday junction (HJ) DNA during genetic recombination and DNA repair, while the RuvA-RuvB complex plays an important role in the rescue of blocked DNA replication forks via replication fork reversal (RFR). RuvA specifically binds to HJ cruciform DNA, conferring on it an open structure. The RuvB hexamer acts as an ATP-dependent pump, pulling dsDNA into and through the RuvAB complex. RuvB forms 2 homohexamers on either side of HJ DNA bound by 1 or 2 RuvA tetramers; 4 subunits per hexamer contact DNA at a time. Coordinated motions by a converter formed by DNA-disengaged RuvB subunits stimulates ATP hydrolysis and nucleotide exchange. Immobilization of the converter enables RuvB to convert the ATP-contained energy into a lever motion, pulling 2 nucleotides of DNA out of the RuvA tetramer per ATP hydrolyzed, thus driving DNA branch migration. The RuvB motors rotate together with the DNA substrate, which together with the progressing nucleotide cycle form the mechanistic basis for DNA recombination by continuous HJ branch migration. Branch migration allows RuvC to scan DNA until it finds its consensus sequence, where it cleaves and resolves cruciform DNA. In Xanthomonas euvesicatoria pv. vesicatoria (strain 85-10) (Xanthomonas campestris pv. vesicatoria), this protein is Holliday junction branch migration complex subunit RuvB.